Consider the following 519-residue polypeptide: Probable DNA ligase (519 aa).

E221 serves as a coordination point for ATP. Residue K223 is the N6-AMP-lysine intermediate of the active site. 6 residues coordinate ATP: R228, R243, E272, F312, R384, and K390.

The protein belongs to the ATP-dependent DNA ligase family. The cofactor is Mg(2+).

It carries out the reaction ATP + (deoxyribonucleotide)n-3'-hydroxyl + 5'-phospho-(deoxyribonucleotide)m = (deoxyribonucleotide)n+m + AMP + diphosphate.. In terms of biological role, DNA ligase that seals nicks in double-stranded DNA during DNA replication, DNA recombination and DNA repair. This Mycolicibacterium paratuberculosis (strain ATCC BAA-968 / K-10) (Mycobacterium paratuberculosis) protein is Probable DNA ligase.